A 239-amino-acid chain; its full sequence is Norbelladine 4'-O-methyltransferase 5 (239 aa).

Residues Val-55, Glu-77, 79–80 (GV), Ser-85, Asp-103, and Ala-132 each bind S-adenosyl-L-methionine. A divalent metal cation is bound at residue Asp-155. Residue Asp-157 participates in S-adenosyl-L-methionine binding. A divalent metal cation contacts are provided by Asp-181 and Asn-182.

Belongs to the class I-like SAM-binding methyltransferase superfamily. Cation-dependent O-methyltransferase family. Requires Mg(2+) as cofactor.

The catalysed reaction is norbelladine + S-adenosyl-L-methionine = 4'-O-methylnorbelladine + S-adenosyl-L-homocysteine + H(+). It functions in the pathway alkaloid biosynthesis. In terms of biological role, 4'-O-methyltransferase converting norbelladine to 4'-O-methylnorbelladine. 4'-O-methylnorbelladine is a precursor to all Amaryllidaceae alkaloids such as galanthamine, lycorine and haemanthamine, and including haemanthamine- and crinamine-type alkaloids, promising anticancer agents. The sequence is that of Norbelladine 4'-O-methyltransferase 5 from Narcissus aff. pseudonarcissus MK-2014 (Daffodil).